Reading from the N-terminus, the 401-residue chain is tRNA(Met) cytidine acetate ligase (401 aa).

Residues 7–20, G101, N160, and 185–186 each bind ATP; these read IVEYNPFHNGHLYH and RI.

It belongs to the TmcAL family.

It is found in the cytoplasm. It carries out the reaction cytidine(34) in elongator tRNA(Met) + acetate + ATP = N(4)-acetylcytidine(34) in elongator tRNA(Met) + AMP + diphosphate. Functionally, catalyzes the formation of N(4)-acetylcytidine (ac(4)C) at the wobble position of elongator tRNA(Met), using acetate and ATP as substrates. First activates an acetate ion to form acetyladenylate (Ac-AMP) and then transfers the acetyl group to tRNA to form ac(4)C34. The chain is tRNA(Met) cytidine acetate ligase from Geobacillus sp. (strain WCH70).